Reading from the N-terminus, the 253-residue chain is Sulfate transporter CysZ (253 aa).

Helical transmembrane passes span 31–51, 72–92, 151–171, and 222–242; these read FVIL…WWLF, LSYL…GYFF, IVLL…PVLW, and IPVL…AMWV.

The protein belongs to the CysZ family.

It is found in the cell inner membrane. In terms of biological role, high affinity, high specificity proton-dependent sulfate transporter, which mediates sulfate uptake. Provides the sulfur source for the cysteine synthesis pathway. This is Sulfate transporter CysZ from Salmonella paratyphi A (strain AKU_12601).